Reading from the N-terminus, the 680-residue chain is DNA ligase (680 aa).

Residues 44 to 48 (DYIYD), 94 to 95 (SL), and Glu-124 contribute to the NAD(+) site. The N6-AMP-lysine intermediate role is filled by Lys-126. NAD(+) contacts are provided by Arg-147, Glu-181, Lys-297, and Lys-321. Zn(2+) contacts are provided by Cys-415, Cys-418, Cys-433, and Cys-438. Residues 598–680 (DENSFFYGKK…VDEQVKEDGK (83 aa)) enclose the BRCT domain.

It belongs to the NAD-dependent DNA ligase family. LigA subfamily. Mg(2+) serves as cofactor. Mn(2+) is required as a cofactor.

The catalysed reaction is NAD(+) + (deoxyribonucleotide)n-3'-hydroxyl + 5'-phospho-(deoxyribonucleotide)m = (deoxyribonucleotide)n+m + AMP + beta-nicotinamide D-nucleotide.. Its function is as follows. DNA ligase that catalyzes the formation of phosphodiester linkages between 5'-phosphoryl and 3'-hydroxyl groups in double-stranded DNA using NAD as a coenzyme and as the energy source for the reaction. It is essential for DNA replication and repair of damaged DNA. In Leuconostoc mesenteroides subsp. mesenteroides (strain ATCC 8293 / DSM 20343 / BCRC 11652 / CCM 1803 / JCM 6124 / NCDO 523 / NBRC 100496 / NCIMB 8023 / NCTC 12954 / NRRL B-1118 / 37Y), this protein is DNA ligase.